Consider the following 371-residue polypeptide: DNA replication and repair protein RecF (371 aa).

30–37 (GPNAQGKT) is a binding site for ATP.

Belongs to the RecF family.

The protein resides in the cytoplasm. In terms of biological role, the RecF protein is involved in DNA metabolism; it is required for DNA replication and normal SOS inducibility. RecF binds preferentially to single-stranded, linear DNA. It also seems to bind ATP. This chain is DNA replication and repair protein RecF, found in Desulforamulus reducens (strain ATCC BAA-1160 / DSM 100696 / MI-1) (Desulfotomaculum reducens).